Reading from the N-terminus, the 487-residue chain is ATP synthase subunit beta (487 aa).

171–178 contacts ATP; the sequence is GGAGVGKT.

Belongs to the ATPase alpha/beta chains family. In terms of assembly, F-type ATPases have 2 components, CF(1) - the catalytic core - and CF(0) - the membrane proton channel. CF(1) has five subunits: alpha(3), beta(3), gamma(1), delta(1), epsilon(1). CF(0) has three main subunits: a(1), b(2) and c(9-12). The alpha and beta chains form an alternating ring which encloses part of the gamma chain. CF(1) is attached to CF(0) by a central stalk formed by the gamma and epsilon chains, while a peripheral stalk is formed by the delta and b chains.

Its subcellular location is the cell membrane. It catalyses the reaction ATP + H2O + 4 H(+)(in) = ADP + phosphate + 5 H(+)(out). Produces ATP from ADP in the presence of a proton gradient across the membrane. The catalytic sites are hosted primarily by the beta subunits. The protein is ATP synthase subunit beta of Leifsonia xyli subsp. xyli (strain CTCB07).